The chain runs to 388 residues: MGSTLPTTYKRAFFEKQDATLTLEEVQLIEPQRGEILVKVEACGVCHSDHFAQMNLMGGGFPRVPGHEVVGRVAAVGDGETYWKIGDRTGAGWHGGHDGTCGACKKGLFQMCDNEQVNGITRDGGYAEYVLIRSEAAVRIPDHVNAAKYAPMLCAGVTVFNSIRQMNIPVGETVVIQGLGGLGHLALQYANRFGYRVVALSRGAQKEEFARKLGAHVYIDTSKEDPVAALQKLGGAALIVSTAPSPELINPLIEGLGVLGKLLILSIVGGIEVHTGLLVSERRIAIHRTNSIVRSLLTNSKVGKGKSIWSWPSGHATDSEEAIAFAELQGIDCLVEEFPLEKCNEAFGRSSSTTADRERVFLADFTGLTTTAAMMDGSVRFRAVITME.

Position 46 (Cys46) interacts with Zn(2+). His47 contacts NAD(+). Zn(2+) is bound by residues His67, Glu68, Cys101, Cys104, and Cys112. His67 serves as a coordination point for substrate. NAD(+)-binding positions include 198 to 203 (VALSRG), 295 to 297 (SLL), and 320 to 322 (EEA).

This sequence belongs to the zinc-containing alcohol dehydrogenase family. Zn(2+) serves as cofactor.

It localises to the cytoplasm. The protein resides in the cytosol. The enzyme catalyses neopatulin + NADPH + H(+) = (E)-ascladiol + NADP(+). The protein operates within mycotoxin biosynthesis; patulin biosynthesis. Its function is as follows. Alcohol dehydrogenase; part of the gene cluster that mediates the biosynthesis of patulin, an acetate-derived tetraketide mycotoxin produced by several fungal species that shows antimicrobial properties against several bacteria. PatD catalyzes the conversion of neopatulin into E-ascladiol. The pathway begins with the synthesis of 6-methylsalicylic acid by the polyketide synthase (PKS) patK via condensation of acetate and malonate units. The 6-methylsalicylic acid decarboxylase patG then catalyzes the decarboxylation of 6-methylsalicylic acid to yield m-cresol (also known as 3-methylphenol). These first reactions occur in the cytosol. The intermediate m-cresol is then transported into the endoplasmic reticulum where the cytochrome P450 monooxygenase patH converts it to m-hydroxybenzyl alcohol, which is further converted to gentisyl alcohol by the cytochrome P450 monooxygenase patI. The oxidoreductases patJ and patO further convert gentisyl alcohol to isoepoxydon in the vacuole. PatN catalyzes then the transformation of isoepoxydon into phyllostine. The cluster protein patF is responsible for the conversion from phyllostine to neopatulin whereas the alcohol dehydrogenase patD converts neopatulin to E-ascladiol. The steps between isoepoxydon and E-ascladiol occur in the cytosol, and E-ascladiol is probably secreted to the extracellular space by one of the cluster-specific transporters patC or patM. Finally, the secreted patulin synthase patE catalyzes the conversion of E-ascladiol to patulin. This Aspergillus clavatus (strain ATCC 1007 / CBS 513.65 / DSM 816 / NCTC 3887 / NRRL 1 / QM 1276 / 107) protein is Alcohol dehydrogenase patD.